We begin with the raw amino-acid sequence, 67 residues long: Small ribosomal subunit protein eS27 (67 aa).

Zn(2+)-binding residues include C22, C25, C41, and C44. A C4-type zinc finger spans residues C22–C44.

It belongs to the eukaryotic ribosomal protein eS27 family. Part of the 30S ribosomal subunit. Zn(2+) is required as a cofactor.

In Pyrobaculum islandicum (strain DSM 4184 / JCM 9189 / GEO3), this protein is Small ribosomal subunit protein eS27.